Here is a 315-residue protein sequence, read N- to C-terminus: MTAVESRPAGVIGTSQSPSHRPFGARVKAFVALTKPRIIELLLITTVPVMFLAEQGVPNLKLVLLTCVGGYLSAGGANALNMYIDRDIDALMDRTSQRPLVTGMVSPVECLVFGITLAIVSTLLFGFTVNWLSAWLSLGALLFYVVVYTMILKRRTSQNIVWGGIAGCLPVLIGWSAVTNSMSWAPVILFGVMFFWTPPHYWPLSMKVKEDYARVGVPMLPVIASNKVVARQIVIYSWVMVVVSLLLQPLGYTGWFYTAVALAAGGMWLWEAHGLQNRAKAEVTGGKLKEMRLFHWSITYVSVLFLAIAVDPFLR.

Transmembrane regions (helical) follow at residues 38–58 (IIEL…QGVP), 62–82 (LVLL…ALNM), 111–131 (LVFG…TVNW), 132–152 (LSAW…TMIL), 159–179 (NIVW…SAVT), 184–204 (WAPV…YWPL), 233–253 (IVIY…LGYT), 255–275 (WFYT…AHGL), and 293–313 (LFHW…VDPF).

The protein belongs to the UbiA prenyltransferase family. Protoheme IX farnesyltransferase subfamily.

The protein resides in the cell membrane. It catalyses the reaction heme b + (2E,6E)-farnesyl diphosphate + H2O = Fe(II)-heme o + diphosphate. It participates in porphyrin-containing compound metabolism; heme O biosynthesis; heme O from protoheme: step 1/1. Converts heme B (protoheme IX) to heme O by substitution of the vinyl group on carbon 2 of heme B porphyrin ring with a hydroxyethyl farnesyl side group. The chain is Protoheme IX farnesyltransferase from Streptomyces coelicolor (strain ATCC BAA-471 / A3(2) / M145).